Reading from the N-terminus, the 227-residue chain is ATP-dependent dethiobiotin synthetase BioD (227 aa).

13 to 18 (DIGKTY) contributes to the ATP binding site. Thr-17 provides a ligand contact to Mg(2+). Lys-38 is a catalytic residue. Substrate is bound at residue Ser-42. Residues Asp-55, 116–119 (EGSG), and 179–180 (NN) contribute to the ATP site. Residues Asp-55 and Glu-116 each coordinate Mg(2+).

This sequence belongs to the dethiobiotin synthetase family. In terms of assembly, homodimer. The cofactor is Mg(2+).

The protein resides in the cytoplasm. It carries out the reaction (7R,8S)-7,8-diammoniononanoate + CO2 + ATP = (4R,5S)-dethiobiotin + ADP + phosphate + 3 H(+). The protein operates within cofactor biosynthesis; biotin biosynthesis; biotin from 7,8-diaminononanoate: step 1/2. Functionally, catalyzes a mechanistically unusual reaction, the ATP-dependent insertion of CO2 between the N7 and N8 nitrogen atoms of 7,8-diaminopelargonic acid (DAPA, also called 7,8-diammoniononanoate) to form a ureido ring. The chain is ATP-dependent dethiobiotin synthetase BioD from Clostridium botulinum (strain Kyoto / Type A2).